A 635-amino-acid chain; its full sequence is Threonine--tRNA ligase (635 aa).

One can recognise a TGS domain in the interval 1 to 58; that stretch reads MIHVTCNQEAFELPEGASAMDLANKMKQSHCFVGALINDQEKDLSTTLQDGDTVLFLT. Residues 237 to 528 form a catalytic region; it reads DHRVLGTKLD…LIEHFKGRFP (292 aa). Zn(2+) contacts are provided by Cys328, His379, and His505.

This sequence belongs to the class-II aminoacyl-tRNA synthetase family. Homodimer. It depends on Zn(2+) as a cofactor.

Its subcellular location is the cytoplasm. It catalyses the reaction tRNA(Thr) + L-threonine + ATP = L-threonyl-tRNA(Thr) + AMP + diphosphate + H(+). Its function is as follows. Catalyzes the attachment of threonine to tRNA(Thr) in a two-step reaction: L-threonine is first activated by ATP to form Thr-AMP and then transferred to the acceptor end of tRNA(Thr). Also edits incorrectly charged L-seryl-tRNA(Thr). This is Threonine--tRNA ligase from Chlamydia trachomatis serovar L2b (strain UCH-1/proctitis).